We begin with the raw amino-acid sequence, 313 residues long: Dihydroorotate dehydrogenase (fumarate) (313 aa).

FMN contacts are provided by residues A20 and 44–45 (KS). Substrate-binding positions include K44, 68–72 (NSMGL), and N128. N128 lines the FMN pocket. The active-site Nucleophile is the C131. A substrate-binding site is contributed by N133. Residues K165 and V194 each contribute to the FMN site. 195 to 196 (NS) lines the substrate pocket. Residues G223, C249, 249 to 251 (CGG), and 272 to 273 (GT) contribute to the FMN site.

This sequence belongs to the dihydroorotate dehydrogenase family. Type 1 subfamily. Homodimer. FMN is required as a cofactor.

The protein localises to the cytoplasm. The catalysed reaction is (S)-dihydroorotate + fumarate = orotate + succinate. It functions in the pathway pyrimidine metabolism; UMP biosynthesis via de novo pathway. Functionally, catalyzes the conversion of dihydroorotate to orotate with fumarate as the electron acceptor. Molecular oxygen can replace fumarate in vitro. This is Dihydroorotate dehydrogenase (fumarate) from Trypanosoma brucei brucei (strain 927/4 GUTat10.1).